The sequence spans 474 residues: GTPase Der (474 aa).

EngA-type G domains follow at residues 2-166 (LRIA…NVPE) and 212-385 (LKIA…ETVS). GTP-binding positions include 8–15 (GRPNVGKS), 55–59 (DTGGV), 118–121 (NKAD), 218–225 (GRPNVGKS), 265–269 (DTAGL), and 330–333 (NKWD). The KH-like domain maps to 386–470 (SKVPTPVVNK…PFDLEFKEKT (85 aa)).

It belongs to the TRAFAC class TrmE-Era-EngA-EngB-Septin-like GTPase superfamily. EngA (Der) GTPase family. Associates with the 50S ribosomal subunit.

In terms of biological role, GTPase that plays an essential role in the late steps of ribosome biogenesis. The sequence is that of GTPase Der from Chlamydia caviae (strain ATCC VR-813 / DSM 19441 / 03DC25 / GPIC) (Chlamydophila caviae).